The following is a 247-amino-acid chain: Uridylate kinase (247 aa).

ATP is bound at residue 18-21; sequence KLSG. G60 is a UMP binding site. Residues G61 and R65 each coordinate ATP. UMP-binding positions include D80 and 141–148; that span reads TGNPFFTT. The ATP site is built by T168, Y174, and D177.

This sequence belongs to the UMP kinase family. Homohexamer.

The protein localises to the cytoplasm. It carries out the reaction UMP + ATP = UDP + ADP. It functions in the pathway pyrimidine metabolism; CTP biosynthesis via de novo pathway; UDP from UMP (UMPK route): step 1/1. With respect to regulation, inhibited by UTP. Catalyzes the reversible phosphorylation of UMP to UDP. This Pseudomonas putida (strain ATCC 47054 / DSM 6125 / CFBP 8728 / NCIMB 11950 / KT2440) protein is Uridylate kinase.